The following is an 84-amino-acid chain: Cell division topological specificity factor (84 aa).

The protein belongs to the MinE family.

In terms of biological role, prevents the cell division inhibition by proteins MinC and MinD at internal division sites while permitting inhibition at polar sites. This ensures cell division at the proper site by restricting the formation of a division septum at the midpoint of the long axis of the cell. The chain is Cell division topological specificity factor from Burkholderia cenocepacia (strain ATCC BAA-245 / DSM 16553 / LMG 16656 / NCTC 13227 / J2315 / CF5610) (Burkholderia cepacia (strain J2315)).